A 708-amino-acid chain; its full sequence is Leukotoxin translocation ATP-binding protein LktB (708 aa).

The Peptidase C39 domain occupies methionine 1–valine 126. The 283-residue stretch at phenylalanine 155–glutamine 437 folds into the ABC transmembrane type-1 domain. The next 5 membrane-spanning stretches (helical) occupy residues leucine 159–valine 179, leucine 192–leucine 212, alanine 270–tyrosine 290, leucine 296–leucine 316, and valine 389–glycine 409. One can recognise an ABC transporter domain in the interval isoleucine 469–glutamine 704. Residue glycine 503–serine 510 participates in ATP binding.

This sequence belongs to the ABC transporter superfamily. Protein-1 exporter (TC 3.A.1.109) family. Homodimer.

The protein localises to the cell inner membrane. It carries out the reaction ATP + H2O + proteinSide 1 = ADP + phosphate + proteinSide 2.. Its function is as follows. Part of the ABC transporter complex LktBD involved in leukotoxin export. Transmembrane domains (TMD) form a pore in the inner membrane and the ATP-binding domain (NBD) is responsible for energy generation. The chain is Leukotoxin translocation ATP-binding protein LktB (lktB) from Bibersteinia trehalosi (Pasteurella trehalosi).